A 252-amino-acid polypeptide reads, in one-letter code: tRNA pseudouridine synthase A (252 aa).

The Nucleophile role is filled by D54. Y113 lines the substrate pocket.

Belongs to the tRNA pseudouridine synthase TruA family. Homodimer.

It carries out the reaction uridine(38/39/40) in tRNA = pseudouridine(38/39/40) in tRNA. Functionally, formation of pseudouridine at positions 38, 39 and 40 in the anticodon stem and loop of transfer RNAs. This Bacteroides fragilis (strain ATCC 25285 / DSM 2151 / CCUG 4856 / JCM 11019 / LMG 10263 / NCTC 9343 / Onslow / VPI 2553 / EN-2) protein is tRNA pseudouridine synthase A.